The primary structure comprises 160 residues: Endoribonuclease YbeY (160 aa).

The Zn(2+) site is built by histidine 111, histidine 115, and histidine 121.

The protein belongs to the endoribonuclease YbeY family. Zn(2+) serves as cofactor.

The protein localises to the cytoplasm. In terms of biological role, single strand-specific metallo-endoribonuclease involved in late-stage 70S ribosome quality control and in maturation of the 3' terminus of the 16S rRNA. The chain is Endoribonuclease YbeY from Stutzerimonas stutzeri (strain A1501) (Pseudomonas stutzeri).